Reading from the N-terminus, the 226-residue chain is 2,3-bisphosphoglycerate-dependent phosphoglycerate mutase (226 aa).

Substrate contacts are provided by residues 8 to 15 (RHGQSVWN), 21 to 22 (TG), R58, 109 to 112 (ERMY), K120, 136 to 137 (RR), and 180 to 181 (GN). H9 (tele-phosphohistidine intermediate) is an active-site residue. Residue E109 is the Proton donor/acceptor of the active site.

It belongs to the phosphoglycerate mutase family. BPG-dependent PGAM subfamily.

It carries out the reaction (2R)-2-phosphoglycerate = (2R)-3-phosphoglycerate. Its pathway is carbohydrate degradation; glycolysis; pyruvate from D-glyceraldehyde 3-phosphate: step 3/5. Functionally, catalyzes the interconversion of 2-phosphoglycerate and 3-phosphoglycerate. This chain is 2,3-bisphosphoglycerate-dependent phosphoglycerate mutase, found in Chlamydia trachomatis serovar L2b (strain UCH-1/proctitis).